The chain runs to 340 residues: Ephrin-B3 (340 aa).

Residues 1 to 27 form the signal peptide; that stretch reads MGPPHSGPGGVRVGALLLLGVLGLVSG. In terms of domain architecture, Ephrin RBD spans 28-167; the sequence is LSLEPVYWNS…TRGMKVLLRV (140 aa). The Extracellular portion of the chain corresponds to 28 to 226; sequence LSLEPVYWNS…EGPLPPPSMP (199 aa). Cystine bridges form between cysteine 62-cysteine 104 and cysteine 92-cysteine 156. Residues 168–225 are disordered; that stretch reads GQSPRGGAVPRKPVSEMPMERDRGAAHSLEPGKENLPGDPTSNATSRGAEGPLPPPSM. Over residues 185–200 the composition is skewed to basic and acidic residues; sequence PMERDRGAAHSLEPGK. A glycan (N-linked (GlcNAc...) asparagine) is linked at asparagine 210. Residues 227 to 247 form a helical membrane-spanning segment; the sequence is AVAGAAGGLALLLLGVAGAGG. Residues 248 to 340 are Cytoplasmic-facing; that stretch reads AMCWRRRRAK…QSPPNIYYKV (93 aa). Residues 254–298 are disordered; the sequence is RRAKPSESRHPGPGSFGRGGSLGLGGGGGMGPREAEPGELGIALR. Positions 267 to 284 are enriched in gly residues; sequence GSFGRGGSLGLGGGGGMG. Arginine 271 is modified (omega-N-methylarginine). A Phosphoserine modification is found at serine 274. The PDZ-binding motif lies at 338-340; that stretch reads YKV.

It belongs to the ephrin family. As to quaternary structure, interacts with GRIP1 and GRIP2. (Microbial infection) Interacts with nipah virus and hendra virus glycoprotein. Highly expressed in brain; expressed in embryonic floor plate, roof plate and hindbrain segments.

The protein resides in the membrane. In terms of biological role, cell surface transmembrane ligand for Eph receptors, a family of receptor tyrosine kinases which are crucial for migration, repulsion and adhesion during neuronal, vascular and epithelial development. Binds promiscuously Eph receptors residing on adjacent cells, leading to contact-dependent bidirectional signaling into neighboring cells. The signaling pathway downstream of the receptor is referred to as forward signaling while the signaling pathway downstream of the ephrin ligand is referred to as reverse signaling. May play a pivotal role in forebrain function. Binds to, and induce the collapse of, commissural axons/growth cones in vitro. May play a role in constraining the orientation of longitudinally projecting axons. Functionally, (Microbial infection) Acts as a receptor for nipah virus and hendra virus. This Homo sapiens (Human) protein is Ephrin-B3 (EFNB3).